Here is a 713-residue protein sequence, read N- to C-terminus: MLFRSVVNKPRLGCRQRGVPFTHPLQSLLQCYQCAKHDEHTSYGELGAAVPPFGCAFSTVPDMSHVLAVANEEGIVRLYDTECRDVQRLVVKEFMAHTNAVFDIAWVPGEHKLVTASGDQTAKLWDVKAGDLIGECKGHQCSLKSVAFSKFEKAVFSTGGRDGNIMVWDTRCNKKDGFYRQVNQITGAHNALDKQTPSKVKKRKPYVRGLAPSVDSQQSVTVVIFQDEHTIISAGAVDGIVKVWDLRKNYSAYRQDPVPAKLFPYPGNSTRKLGYSNLVLDPTGTNLFASCTDDNVYMFNATGLKTEPVSVFGGHQNSTFYIKTSVSPDGQFLLSGSSDHSAYIWQVSDPKVPPVTLTGHCQEVTSVAWCQSDFTKIATCSDDNTVRVWRLKRSSEDSAQSDKTETVGWACQKKCVPPSMAANLCTPGKPSMIPSSSLMSSPTPATCAPSYTGDLPMPSSTPVSALLPIPKLQTPQRLNGEGLGASPKQTSSSKISIKDWITRTPKSSTRADTKTPSPRKAFTPVEQYPSVSSTRVQMPYEKRAKRRLETSSEDVEHVCLDHCNCVMELEPGLKKAKLDLCSFSEKERDGSDDKCLRLSDLSRGFDQEFSPGPSTSFLINGTVNPPLSPLSELKSDLRDKENSSPEKNWLSALGHKFKSDKSSPQNKAASSPSSRNSTSKKHPTRNAPNSPVSVPTTPGSMRKICTYFFKKSE.

3 WD repeats span residues 47-89 (GAAV…VQRL), 96-135 (AHTNAVFDIAWVPGEHKLVTASGDQTAKLWDVKAGDLIGE), and 138-178 (GHQC…KDGF). The DDB1-binding motif motif lies at 168-171 (WDTR). The short motif at 197 to 204 (PSKVKKRK) is the Nuclear localization signal element. WD repeat units lie at residues 215–254 (DSQQSVTVVIFQDEHTIISAGAVDGIVKVWDLRKNYSAYR), 270–309 (TRKLGYSNLVLDPTGTNLFASCTDDNVYMFNATGLKTEPV), 314–355 (GHQN…VPPV), and 359–399 (GHCQ…EDSA). The DDB1-binding motif signature appears at 244 to 247 (WDLR). Disordered stretches follow at residues 474 to 544 (TPQR…EKRA), 604 to 623 (GFDQEFSPGPSTSFLINGTV), and 635 to 700 (SDLR…TPGS). Polar residues-rich tracts occupy residues 504 to 516 (TPKSSTRADTKTP) and 612 to 623 (GPSTSFLINGTV). A compositionally biased stretch (basic and acidic residues) spans 635–644 (SDLRDKENSS). A compositionally biased stretch (polar residues) spans 686 to 699 (NAPNSPVSVPTTPG).

This sequence belongs to the WD repeat cdt2 family. Component of the DCX(DTL) E3 ubiquitin ligase complex, at least composed of cul4 (cul4a or cul4b), ddb1, dtl/cdt2 and rbx1.

It localises to the nucleus. Its subcellular location is the cytoplasm. It is found in the cytoskeleton. The protein resides in the microtubule organizing center. The protein localises to the centrosome. It localises to the chromosome. It functions in the pathway protein modification; protein ubiquitination. Its function is as follows. Substrate-specific adapter of a DCX (DDB1-CUL4-X-box) E3 ubiquitin-protein ligase complex required for cell cycle control, DNA damage response and translesion DNA synthesis. The DCX(DTL) complex, also named CRL4(CDT2) complex, mediates the polyubiquitination and subsequent degradation of CDT1, CDKN1A/p21(CIP1), KMT5A and SDE2. CDT1 degradation in response to DNA damage is necessary to ensure proper cell cycle regulation of DNA replication. CDKN1A/p21(CIP1) degradation during S phase or following UV irradiation is essential to control replication licensing. KMT5A degradation is also important for a proper regulation of mechanisms such as TGF-beta signaling, cell cycle progression, DNA repair and cell migration. Most substrates require their interaction with PCNA for their polyubiquitination: substrates interact with PCNA via their PIP-box, and those containing the 'K+4' motif in the PIP box, recruit the DCX(DTL) complex, leading to their degradation. In undamaged proliferating cells, the DCX(DTL) complex also promotes the 'Lys-164' monoubiquitination of PCNA, thereby being involved in PCNA-dependent translesion DNA synthesis. May play a role in the regulation of the circadian clock. The protein is Denticleless protein homolog (dtl) of Xenopus tropicalis (Western clawed frog).